The sequence spans 292 residues: AKT-interacting protein (292 aa).

Positions 1 to 63 are disordered; sequence MNPLWSMSAG…TSPAPAAQST (63 aa). Residues 14 to 23 are compositionally biased toward basic and acidic residues; sequence KRAEGEEKTL. The residue at position 30 (serine 30) is a Phosphoserine. Positions 74–222 constitute a UBC core domain; sequence YLEYSLLAEF…VVDSVKVCTA (149 aa).

It belongs to the ubiquitin-conjugating enzyme family. FTS subfamily. As to quaternary structure, component of the FTS/Hook/FHIP complex (FHF complex), composed of AKTIP/FTS, FHIP1B, and one or more members of the Hook family of proteins HOOK1, HOOK2, and HOOK3. Interacts directly with HOOK1, HOOK2 and HOOK3. The FHF complex associates with the homotypic vesicular sorting complex (the HOPS complex). Also interacts with AKT1. May interact with FHIP1A. Ubiquitous. Highest expression in kidney, testis and brain and lowest in spleen and liver.

It is found in the cytoplasm. Its subcellular location is the cell membrane. Its function is as follows. Component of the FTS/Hook/FHIP complex (FHF complex). The FHF complex may function to promote vesicle trafficking and/or fusion via the homotypic vesicular protein sorting complex (the HOPS complex). Regulates apoptosis by enhancing phosphorylation and activation of AKT1. Increases release of TNFSF6 via the AKT1/GSK3B/NFATC1 signaling cascade. FHF complex promotes the distribution of AP-4 complex to the perinuclear area of the cell. This is AKT-interacting protein (Aktip) from Mus musculus (Mouse).